The primary structure comprises 64 residues: Conotoxin mr5.3 (64 aa).

The first 19 residues, 1-19, serve as a signal peptide directing secretion; it reads MRCVPVFVILLLLIASVPS. The propeptide occupies 20-48; sequence VDAQLKTKDDMPLASSHANVKRTLQILRN. 4-carboxyglutamate occurs at positions 56 and 60.

Post-translationally, contains 2 disulfide bonds that can be either 'C1-C3, C2-C4' or 'C1-C4, C2-C3', since these disulfide connectivities have been observed for conotoxins with cysteine framework V (for examples, see AC P0DQQ7 and AC P81755). Expressed by the venom duct.

Its subcellular location is the secreted. The chain is Conotoxin mr5.3 from Conus marmoreus (Marble cone).